Consider the following 76-residue polypeptide: MKDNFTRLQSIVGKQLGIDPSKVKLESDFGRELGADSLDVVELVMAIEDEFEVNIEDQSASQIATVQDVLNYLERN.

The Carrier domain occupies 2–76 (KDNFTRLQSI…QDVLNYLERN (75 aa)). The residue at position 37 (Ser37) is an O-(pantetheine 4'-phosphoryl)serine.

The protein belongs to the acyl carrier protein (ACP) family. 4'-phosphopantetheine is transferred from CoA to a specific serine of apo-ACP by AcpS. This modification is essential for activity because fatty acids are bound in thioester linkage to the sulfhydryl of the prosthetic group.

It is found in the plastid. It localises to the chloroplast. It functions in the pathway lipid metabolism; fatty acid biosynthesis. Carrier of the growing fatty acid chain in fatty acid biosynthesis. This Phaeodactylum tricornutum (strain CCAP 1055/1) protein is Acyl carrier protein.